Reading from the N-terminus, the 139-residue chain is Nucleoside diphosphate kinase (139 aa).

ATP is bound by residues K11, F59, R87, T93, R104, and N114. The active-site Pros-phosphohistidine intermediate is H117.

It belongs to the NDK family. Homotetramer. Mg(2+) serves as cofactor.

The protein localises to the cytoplasm. It carries out the reaction a 2'-deoxyribonucleoside 5'-diphosphate + ATP = a 2'-deoxyribonucleoside 5'-triphosphate + ADP. The catalysed reaction is a ribonucleoside 5'-diphosphate + ATP = a ribonucleoside 5'-triphosphate + ADP. Its function is as follows. Major role in the synthesis of nucleoside triphosphates other than ATP. The ATP gamma phosphate is transferred to the NDP beta phosphate via a ping-pong mechanism, using a phosphorylated active-site intermediate. In Wolbachia pipientis wMel, this protein is Nucleoside diphosphate kinase.